A 423-amino-acid chain; its full sequence is MSRLAKRHPDLLSCNFNQDYSCIAVGHKKGYTILNCDPFGKVHSNNDQGATGIVEMLFCTSLVALVGAAENQPSNSPRKLQIVNTKRQSTICELIFPTSVLAVKMNRKRLIVVLENEIYIYDISTMKLLHTIETGPNPNAVCALSSSSERSYLAYPSPVPSASSTPLSSSAIPAPPPAPTTGDVLLFDTISLTALNVIQAHKTPIAALALNSTGTMLATASDKGTVVRVFSVPDAKKLWQFRRGSSSARIFSINFNLMSTLLAVSSDTSTIHIYRLASSRKGGKDADDASTEEARSPTPSETPLASSPPLAAGKLDSHSAASSLRRRSYHLGKSFVGGVGGYLPKSVSEMWEPQRDFAFIKLRGNHGRTVVAMSATVPQVMVISSEGLFQAYNIDLENGGECSLMKEFALLGSEDFGNGSNGI.

WD repeat units follow at residues 200–240 (AHKT…KLWQ) and 245–284 (SSSA…KGGK). A L/FRRG motif motif is present at residues 241-245 (FRRGS). The interval 281–317 (KGGKDADDASTEEARSPTPSETPLASSPPLAAGKLDS) is disordered. The span at 282–295 (GGKDADDASTEEAR) shows a compositional bias: basic and acidic residues.

The protein belongs to the WD repeat PROPPIN family. Component of the PI(3,5)P2 regulatory complex.

The protein localises to the preautophagosomal structure membrane. It localises to the vacuole membrane. It is found in the endosome membrane. Its function is as follows. The PI(3,5)P2 regulatory complex regulates both the synthesis and turnover of phosphatidylinositol 3,5-bisphosphate (PtdIns(3,5)P2). Necessary for proper vacuole morphology. Plays an important role in osmotically-induced vacuole fragmentation. Required for cytoplasm to vacuole transport (Cvt) vesicle formation, pexophagy and starvation-induced autophagy. Involved in correct ATG9 trafficking to the pre-autophagosomal structure. Might also be involved in premeiotic DNA replication. In Cryptococcus neoformans var. neoformans serotype D (strain JEC21 / ATCC MYA-565) (Filobasidiella neoformans), this protein is Autophagy-related protein 18 (ATG18).